A 182-amino-acid polypeptide reads, in one-letter code: Segregation and condensation protein B (182 aa).

This sequence belongs to the ScpB family. Homodimer. Homodimerization may be required to stabilize the binding of ScpA to the Smc head domains. Component of a cohesin-like complex composed of ScpA, ScpB and the Smc homodimer, in which ScpA and ScpB bind to the head domain of Smc. The presence of the three proteins is required for the association of the complex with DNA.

It localises to the cytoplasm. In terms of biological role, participates in chromosomal partition during cell division. May act via the formation of a condensin-like complex containing Smc and ScpA that pull DNA away from mid-cell into both cell halves. The chain is Segregation and condensation protein B from Staphylococcus saprophyticus subsp. saprophyticus (strain ATCC 15305 / DSM 20229 / NCIMB 8711 / NCTC 7292 / S-41).